Consider the following 152-residue polypeptide: SKP1-like protein 10 (152 aa).

Residues Ile94 to Glu152 are interaction with the F-box domain of F-box proteins.

It belongs to the SKP1 family. In terms of assembly, part of a SCF (SKP1-cullin-F-box) protein ligase complex. Interacts with CPR1/CPR30. In terms of tissue distribution, expressed in young seedlings, roots, leaves, floral stems, inflorescences, and siliques.

The protein resides in the nucleus. The protein operates within protein modification; protein ubiquitination. Its function is as follows. Involved in ubiquitination and subsequent proteasomal degradation of target proteins. Together with CUL1, RBX1 and a F-box protein, it forms a SCF E3 ubiquitin ligase complex. The functional specificity of this complex depends on the type of F-box protein. In the SCF complex, it serves as an adapter that links the F-box protein to CUL1. The protein is SKP1-like protein 10 (ASK10) of Arabidopsis thaliana (Mouse-ear cress).